Here is a 416-residue protein sequence, read N- to C-terminus: Queuine tRNA-ribosyltransferase accessory subunit 2 (416 aa).

Cys-350, Cys-352, Cys-355, and His-381 together coordinate Zn(2+).

This sequence belongs to the queuine tRNA-ribosyltransferase family. QTRT2 subfamily. In terms of assembly, heterodimer of a catalytic subunit qtrt1 and an accessory subunit qtrt2. It depends on Zn(2+) as a cofactor.

The protein localises to the cytoplasm. The protein resides in the mitochondrion outer membrane. Functionally, non-catalytic subunit of the queuine tRNA-ribosyltransferase (TGT) that catalyzes the base-exchange of a guanine (G) residue with queuine (Q) at position 34 (anticodon wobble position) in tRNAs with GU(N) anticodons (tRNA-Asp, -Asn, -His and -Tyr), resulting in the hypermodified nucleoside queuosine (7-(((4,5-cis-dihydroxy-2-cyclopenten-1-yl)amino)methyl)-7-deazaguanosine). The chain is Queuine tRNA-ribosyltransferase accessory subunit 2 from Danio rerio (Zebrafish).